We begin with the raw amino-acid sequence, 205 residues long: Probable GTP-binding protein EngB (205 aa).

The 175-residue stretch at 27–201 folds into the EngB-type G domain; it reads EGMEIAFAGR…AAKLDSWFSS (175 aa). Residues 35-42, 62-66, 80-83, 147-150, and 180-182 each bind GTP; these read GRSNAGKS, GRTQL, DLPG, TKAD, and FSA. Residues Ser-42 and Thr-64 each coordinate Mg(2+).

It belongs to the TRAFAC class TrmE-Era-EngA-EngB-Septin-like GTPase superfamily. EngB GTPase family. Requires Mg(2+) as cofactor.

Functionally, necessary for normal cell division and for the maintenance of normal septation. The polypeptide is Probable GTP-binding protein EngB (Mannheimia succiniciproducens (strain KCTC 0769BP / MBEL55E)).